A 153-amino-acid chain; its full sequence is ATP synthase subunit a (153 aa).

The next 2 helical transmembrane spans lie at 43–63 and 104–124; these read AFHL…LLIF and IAPL…VDLI.

This sequence belongs to the ATPase A chain family. F-type ATPases have 2 components, CF(1) - the catalytic core - and CF(0) - the membrane proton channel. CF(1) has five subunits: alpha(3), beta(3), gamma(1), delta(1), epsilon(1). CF(0) has three main subunits: a(1), b(2) and c(9-12). The alpha and beta chains form an alternating ring which encloses part of the gamma chain. CF(1) is attached to CF(0) by a central stalk formed by the gamma and epsilon chains, while a peripheral stalk is formed by the delta and b chains.

Its subcellular location is the cell inner membrane. In terms of biological role, key component of the proton channel; it plays a direct role in the translocation of protons across the membrane. The chain is ATP synthase subunit a (atpB) from Pseudomonas putida (Arthrobacter siderocapsulatus).